Reading from the N-terminus, the 474-residue chain is Gamma-aminobutyric acid receptor subunit beta-1 (474 aa).

Positions 1–25 (MWTVQNRESLGLLSFPVMIAMVCCA) are cleaved as a signal peptide. At 26 to 245 (HSANEPSNMS…SFRLKRNIGY (220 aa)) the chain is on the extracellular side. N33 and N105 each carry an N-linked (GlcNAc...) asparagine glycan. A histamine-binding site is contributed by Y122. C161 and C175 are oxidised to a cystine. An N-linked (GlcNAc...) asparagine glycan is attached at N174. Residues 181 to 182 (SY) and T227 each bind histamine. 2 residues coordinate 4-aminobutanoate: Y182 and T227. The next 3 membrane-spanning stretches (helical) occupy residues 246-267 (FILQ…SFWI), 271-293 (ASAA…STHL), and 305-327 (AIDI…YAFV). Residues 328 to 451 (NYIFFGKGPQ…DLTDVNSIDK (124 aa)) are Cytoplasmic-facing. The chain crosses the membrane as a helical span at residues 452-473 (WSRMFFPITFSLFNVVYWLYYV).

It belongs to the ligand-gated ion channel (TC 1.A.9) family. Gamma-aminobutyric acid receptor (TC 1.A.9.5) subfamily. GABRB1 sub-subfamily. In terms of assembly, heteropentamer, formed by a combination of alpha (GABRA1-6), beta (GABRB1-3), gamma (GABRG1-3), delta (GABRD), epsilon (GABRE), rho (GABRR1-3), pi (GABRP) and theta (GABRQ) chains, each subunit exhibiting distinct physiological and pharmacological properties. Binds UBQLN1.

The protein localises to the postsynaptic cell membrane. The protein resides in the cell membrane. The catalysed reaction is chloride(in) = chloride(out). Its activity is regulated as follows. Potentiated by histamine. Its function is as follows. Beta subunit of the heteropentameric ligand-gated chloride channel gated by gamma-aminobutyric acid (GABA), a major inhibitory neurotransmitter in the brain. GABA-gated chloride channels, also named GABA(A) receptors (GABAAR), consist of five subunits arranged around a central pore and contain GABA active binding site(s) located at the alpha and beta subunit interface(s). When activated by GABA, GABAARs selectively allow the flow of chloride anions across the cell membrane down their electrochemical gradient. Chloride influx into the postsynaptic neuron following GABAAR opening decreases the neuron ability to generate a new action potential, thereby reducing nerve transmission. Beta-containing GABAARs can simultaneously bind GABA and histamine where histamine binds at the interface of two neighboring beta subunits, which may be involved in the regulation of sleep and wakefulness. This chain is Gamma-aminobutyric acid receptor subunit beta-1 (GABRB1), found in Bos taurus (Bovine).